Consider the following 350-residue polypeptide: Formimidoylglutamase (350 aa).

His-130, Asp-165, His-167, Asp-169, Asp-269, and Asp-271 together coordinate Mn(2+).

The protein belongs to the arginase family. Requires Mn(2+) as cofactor.

The enzyme catalyses N-formimidoyl-L-glutamate + H2O = formamide + L-glutamate. It functions in the pathway amino-acid degradation; L-histidine degradation into L-glutamate; L-glutamate from N-formimidoyl-L-glutamate (hydrolase route): step 1/1. Functionally, catalyzes the conversion of N-formimidoyl-L-glutamate to L-glutamate and formamide. In Aliivibrio fischeri (strain ATCC 700601 / ES114) (Vibrio fischeri), this protein is Formimidoylglutamase.